Here is a 221-residue protein sequence, read N- to C-terminus: MLFFRKRAEMPAPDQILPGRPTPLPTAERHFVNGRALKGPYPEGIETALFGLGCFWGAERKFWQLGDGIWVTAVGYAAGTTPNPTYEEVCTGLTGHNEVVLVAYDPAVLPFGQLLRTFWESHDPTQGMRQGNDVGTQYRSGLYVSDPERRAEAEASRDAYAQALRAKGFGSITTEIRDPGPFYFAEAYHQQYLAKNPAGYCGLGGTGVACPVGTGVRSAAE.

Cys-54 is a catalytic residue.

It belongs to the MsrA Met sulfoxide reductase family.

It carries out the reaction L-methionyl-[protein] + [thioredoxin]-disulfide + H2O = L-methionyl-(S)-S-oxide-[protein] + [thioredoxin]-dithiol. It catalyses the reaction [thioredoxin]-disulfide + L-methionine + H2O = L-methionine (S)-S-oxide + [thioredoxin]-dithiol. In terms of biological role, has an important function as a repair enzyme for proteins that have been inactivated by oxidation. Catalyzes the reversible oxidation-reduction of methionine sulfoxide in proteins to methionine. This Methylobacterium sp. (strain 4-46) protein is Peptide methionine sulfoxide reductase MsrA.